The following is a 443-amino-acid chain: MRKFFGTDGIRGKVGAGKMTPELALKLGWAAGRVLSRTGTKKVIIGKDTRISGYLFESAMEAGLSAAGLNVMLMGPMPTPAVAYLTRTFRAEAGVVISASHNPYYDNGIKFFSTDGSKLDDEVELEIERELEKPLECVESHLLGKVSRIEDAAGRYIEYCKGNFPAEHTLNGLKIVVDCAHGATYHIAPSVFRELGAEVITIGDKPDGININHEVGATSMGKIRETVIAEKADLGIALDGDGDRIMMVNRHGKVIDGDEILYILACDAQDRGVLKGGVVGTLMSNLGLDLALKARDIPFARSKVGDRYVMELLKEKDWRIGGENSGHILNLDHGTTGDGIVAGILVLAAMCRKQATLEELTEGIKMLPQVLVNVRFEGTHNPLEADSVLSAQAEVEAKLGERGRVLLRKSGTEPLIRVMVEGDVASDVKAHANYIAEAIKALV.

Ser100 functions as the Phosphoserine intermediate in the catalytic mechanism. Mg(2+) is bound by residues Ser100, Asp239, Asp241, and Asp243. A Phosphoserine modification is found at Ser100.

It belongs to the phosphohexose mutase family. It depends on Mg(2+) as a cofactor. Post-translationally, activated by phosphorylation.

The catalysed reaction is alpha-D-glucosamine 1-phosphate = D-glucosamine 6-phosphate. In terms of biological role, catalyzes the conversion of glucosamine-6-phosphate to glucosamine-1-phosphate. This is Phosphoglucosamine mutase from Shewanella loihica (strain ATCC BAA-1088 / PV-4).